The primary structure comprises 282 residues: Elongation factor Ts (282 aa).

Positions 81-84 (TDFV) are involved in Mg(2+) ion dislocation from EF-Tu. A compositionally biased stretch (low complexity) spans 218–270 (KPAQPAQVAEVAAAPPAEPVADQPAAEPPAESVAPEPVVAESADAEPAPAAEG). The interval 218 to 282 (KPAQPAQVAE…SKKGSTKKKK (65 aa)) is disordered. Basic residues predominate over residues 273–282 (SKKGSTKKKK).

It belongs to the EF-Ts family.

It is found in the cytoplasm. Associates with the EF-Tu.GDP complex and induces the exchange of GDP to GTP. It remains bound to the aminoacyl-tRNA.EF-Tu.GTP complex up to the GTP hydrolysis stage on the ribosome. In Synechococcus sp. (strain JA-3-3Ab) (Cyanobacteria bacterium Yellowstone A-Prime), this protein is Elongation factor Ts.